A 271-amino-acid polypeptide reads, in one-letter code: Small ribosomal subunit protein uS2 (271 aa).

A disordered region spans residues 235 to 271 (FDAKNPLKPQNYNAPNKRPYQDSPRKPSYQNQNQNQI). Residues 262 to 271 (SYQNQNQNQI) are compositionally biased toward polar residues.

This sequence belongs to the universal ribosomal protein uS2 family.

The polypeptide is Small ribosomal subunit protein uS2 (Onion yellows phytoplasma (strain OY-M)).